Here is a 253-residue protein sequence, read N- to C-terminus: Geranylgeranylglyceryl phosphate synthase (253 aa).

Mg(2+)-binding residues include aspartate 28 and serine 53. Sn-glycerol 1-phosphate is bound by residues 172-178, 203-204, and 225-226; these read YLEAGSG, GG, and GN.

Belongs to the GGGP/HepGP synthase family. Group II subfamily. Mg(2+) serves as cofactor.

It localises to the cytoplasm. It catalyses the reaction sn-glycerol 1-phosphate + (2E,6E,10E)-geranylgeranyl diphosphate = sn-3-O-(geranylgeranyl)glycerol 1-phosphate + diphosphate. The protein operates within membrane lipid metabolism; glycerophospholipid metabolism. Prenyltransferase that catalyzes the transfer of the geranylgeranyl moiety of geranylgeranyl diphosphate (GGPP) to the C3 hydroxyl of sn-glycerol-1-phosphate (G1P). This reaction is the first ether-bond-formation step in the biosynthesis of archaeal membrane lipids. The polypeptide is Geranylgeranylglyceryl phosphate synthase (Methanocaldococcus jannaschii (strain ATCC 43067 / DSM 2661 / JAL-1 / JCM 10045 / NBRC 100440) (Methanococcus jannaschii)).